Consider the following 258-residue polypeptide: 5'-nucleotidase SurE (258 aa).

Residues aspartate 9, aspartate 10, serine 42, and asparagine 96 each contribute to the a divalent metal cation site.

Belongs to the SurE nucleotidase family. A divalent metal cation is required as a cofactor.

It localises to the cytoplasm. It catalyses the reaction a ribonucleoside 5'-phosphate + H2O = a ribonucleoside + phosphate. In terms of biological role, nucleotidase that shows phosphatase activity on nucleoside 5'-monophosphates. This chain is 5'-nucleotidase SurE, found in Campylobacter jejuni subsp. doylei (strain ATCC BAA-1458 / RM4099 / 269.97).